The following is a 250-amino-acid chain: 3-deoxy-manno-octulosonate cytidylyltransferase (250 aa).

It belongs to the KdsB family.

It localises to the cytoplasm. It carries out the reaction 3-deoxy-alpha-D-manno-oct-2-ulosonate + CTP = CMP-3-deoxy-beta-D-manno-octulosonate + diphosphate. It participates in nucleotide-sugar biosynthesis; CMP-3-deoxy-D-manno-octulosonate biosynthesis; CMP-3-deoxy-D-manno-octulosonate from 3-deoxy-D-manno-octulosonate and CTP: step 1/1. The protein operates within bacterial outer membrane biogenesis; lipopolysaccharide biosynthesis. In terms of biological role, activates KDO (a required 8-carbon sugar) for incorporation into bacterial lipopolysaccharide in Gram-negative bacteria. The chain is 3-deoxy-manno-octulosonate cytidylyltransferase from Syntrophotalea carbinolica (strain DSM 2380 / NBRC 103641 / GraBd1) (Pelobacter carbinolicus).